The following is a 156-amino-acid chain: Ribosomal RNA large subunit methyltransferase H (156 aa).

S-adenosyl-L-methionine is bound by residues L73, G104, and 123-128 (LSKLTL).

The protein belongs to the RNA methyltransferase RlmH family. As to quaternary structure, homodimer.

Its subcellular location is the cytoplasm. The enzyme catalyses pseudouridine(1915) in 23S rRNA + S-adenosyl-L-methionine = N(3)-methylpseudouridine(1915) in 23S rRNA + S-adenosyl-L-homocysteine + H(+). In terms of biological role, specifically methylates the pseudouridine at position 1915 (m3Psi1915) in 23S rRNA. This is Ribosomal RNA large subunit methyltransferase H from Idiomarina loihiensis (strain ATCC BAA-735 / DSM 15497 / L2-TR).